Here is a 715-residue protein sequence, read N- to C-terminus: Transcription activator of gluconeogenesis MGYG_02011 (715 aa).

Polar residues predominate over residues 1-14 (MSPHQTTGQESDNM). Residues 1–28 (MSPHQTTGQESDNMAVNGENAPASSQYI) form a disordered region. The zn(2)-C6 fungal-type DNA-binding region spans 66–94 (CYACQRGHLTCGDERPCQRCIKRGFQDAC). Composition is skewed to polar residues over residues 129–166 (QNNVNGSNTSPGVPQQMTSPNFYSTQQSPDYNSFPQNK), 179–191 (YASQSPVSPTYQI), 203–223 (SLPQSASETPSTANAAPGQFN), and 362–385 (MMTTNSATFEDTTNSGAFSSRPNA). Disordered regions lie at residues 129–223 (QNNV…GQFN), 354–414 (SPAS…RRRH), 534–569 (NHNVNTGGSSGLVTDSTSRGSYTPRPYSSDVYNSST), and 628–663 (GSNGEADAGQNGEASSSEANELNGSNANGATTNGRG). A compositionally biased stretch (low complexity) spans 386–400 (SVSQQRQQPVVSTPQ). 2 stretches are compositionally biased toward polar residues: residues 535–554 (HNVNTGGSSGLVTDSTSRGS) and 639–649 (GEASSSEANEL). Residues 650 to 662 (NGSNANGATTNGR) are compositionally biased toward low complexity.

This sequence belongs to the ERT1/acuK family.

The protein localises to the nucleus. Transcription factor which regulates nonfermentable carbon utilization. Activator of gluconeogenetic genes. The sequence is that of Transcription activator of gluconeogenesis MGYG_02011 from Arthroderma gypseum (strain ATCC MYA-4604 / CBS 118893) (Microsporum gypseum).